The following is an 83-amino-acid chain: Toxin CjTL8 (83 aa).

The signal sequence occupies residues 1-20 (MSSAIKILALLMVLVALAQA). A propeptide spanning residues 21 to 44 (KPRKDYRAYPDFDDKSVILEDDKR) is cleaved from the precursor. Residue Phe81 is modified to Phenylalanine amide.

Post-translationally, contains 3 disulfide bonds.

It is found in the secreted. The protein localises to the nematocyst. In vivo, induces immediate paralysis on shrimps (C.multidentata), followed by death when high doses are injected. No activity is observed when injected into fly larvae (M.domestica). The sequence is that of Toxin CjTL8 from Epiactis japonica (Sea anemone).